We begin with the raw amino-acid sequence, 160 residues long: Sulfur-rich protein (160 aa).

Helical transmembrane passes span 63 to 83 and 92 to 112; these read ITMV…TFVL and FLFL…SVCM.

The protein localises to the membrane. The sequence is that of Sulfur-rich protein (srp) from Chlamydophila psittaci (strain ATCC VR-125 / 6BC) (Chlamydia psittaci).